The chain runs to 128 residues: Cytochrome c-type biogenesis protein CcmE (128 aa).

The Cytoplasmic portion of the chain corresponds to 1-8; it reads MQKRVRNR. The chain crosses the membrane as a helical; Signal-anchor for type II membrane protein span at residues 9 to 29; the sequence is LITIIICFCSACLGISIILYN. Topologically, residues 30–128 are extracellular; the sequence is LEKNIVFFLP…KHDENYRPPQ (99 aa). Residues His120 and Tyr124 each contribute to the heme site.

Belongs to the CcmE/CycJ family.

It is found in the cell membrane. Its function is as follows. Heme chaperone required for the biogenesis of c-type cytochromes. Transiently binds heme delivered by CcmC and transfers the heme to apo-cytochromes in a process facilitated by CcmF and CcmH. This Rickettsia africae (strain ESF-5) protein is Cytochrome c-type biogenesis protein CcmE.